The primary structure comprises 279 residues: Pantothenate synthetase (279 aa).

26 to 33 (MGNLHEGH) contacts ATP. His-33 acts as the Proton donor in catalysis. Gln-57 lines the (R)-pantoate pocket. A beta-alanine-binding site is contributed by Gln-57. An ATP-binding site is contributed by 144-147 (GKKD). Gln-150 provides a ligand contact to (R)-pantoate. ATP-binding positions include Val-173 and 181-184 (LSSR).

This sequence belongs to the pantothenate synthetase family. Homodimer.

The protein localises to the cytoplasm. It catalyses the reaction (R)-pantoate + beta-alanine + ATP = (R)-pantothenate + AMP + diphosphate + H(+). It participates in cofactor biosynthesis; (R)-pantothenate biosynthesis; (R)-pantothenate from (R)-pantoate and beta-alanine: step 1/1. Functionally, catalyzes the condensation of pantoate with beta-alanine in an ATP-dependent reaction via a pantoyl-adenylate intermediate. In Burkholderia ambifaria (strain MC40-6), this protein is Pantothenate synthetase.